A 609-amino-acid polypeptide reads, in one-letter code: UvrABC system protein C (609 aa).

Positions 15–93 (SSAGVYRMYD…IKQYMPKYNV (79 aa)) constitute a GIY-YIG domain. The region spanning 202-237 (QQVVTNLVTKMEQAAEEFHYEQAAAYRDQITALRKV) is the UVR domain.

It belongs to the UvrC family. Interacts with UvrB in an incision complex.

The protein localises to the cytoplasm. In terms of biological role, the UvrABC repair system catalyzes the recognition and processing of DNA lesions. UvrC both incises the 5' and 3' sides of the lesion. The N-terminal half is responsible for the 3' incision and the C-terminal half is responsible for the 5' incision. The sequence is that of UvrABC system protein C from Shewanella denitrificans (strain OS217 / ATCC BAA-1090 / DSM 15013).